The following is a 24-amino-acid chain: General odorant-binding protein (24 aa).

Belongs to the PBP/GOBP family. In terms of assembly, homodimer. As to expression, antenna.

Its function is as follows. Present in the aqueous fluid surrounding olfactory sensory dendrites and are thought to aid in the capture and transport of hydrophobic odorants into and through this fluid. The sequence is that of General odorant-binding protein from Antheraea polyphemus (Polyphemus moth).